Consider the following 97-residue polypeptide: Acylphosphatase (97 aa).

An Acylphosphatase-like domain is found at Lys-3 to Tyr-97. Active-site residues include Arg-18 and Asn-36.

Belongs to the acylphosphatase family.

The enzyme catalyses an acyl phosphate + H2O = a carboxylate + phosphate + H(+). In Lactococcus lactis subsp. lactis (strain IL1403) (Streptococcus lactis), this protein is Acylphosphatase (acyP).